Consider the following 276-residue polypeptide: HUWE1-associated protein modifying stress responses 2 (276 aa).

Disordered stretches follow at residues 146 to 182 (GKVP…TPVG), 204 to 238 (ISMR…PNSL), and 252 to 276 (VRKR…NRMV). Positions 149-165 (PPTPQPPRTPRMSPRPP) are enriched in pro residues. Composition is skewed to low complexity over residues 166-179 (AAAS…ESGT) and 208-219 (SGPPGSSSQDGG). Residues 252–276 (VRKRTSAQFGDGSADSPLHKRNRMV) are nuclear localization signal.

The protein belongs to the HAPSTR1 family. As to quaternary structure, homooligomer. Heterooligomer with HAPSTR1; the interaction is direct and stabilizes HAPSTR1 independently of HUWE1. Interacts with HUWE1.

The protein localises to the nucleus. In terms of biological role, together with HAPSTR1 plays a central regulatory role in the cellular response to molecular stressors, such as DNA damage, nutrient scarcity, and protein misfolding. Regulates these multiple stress response signaling pathways by stabilizing HAPSTR1, but also independently of HAPSTR1. This chain is HUWE1-associated protein modifying stress responses 2, found in Mus musculus (Mouse).